The sequence spans 613 residues: tRNA 5-methylaminomethyl-2-thiouridine biosynthesis bifunctional protein MnmC (613 aa).

The tRNA (mnm(5)s(2)U34)-methyltransferase stretch occupies residues 1–225; the sequence is MKKAKLIFKD…KREMIKAYLE (225 aa). Residues 252–613 are FAD-dependent cmnm(5)s(2)U34 oxidoreductase; the sequence is IGAGISSAVL…FLIRKLKKGL (362 aa).

In the N-terminal section; belongs to the methyltransferase superfamily. tRNA (mnm(5)s(2)U34)-methyltransferase family. The protein in the C-terminal section; belongs to the DAO family. Requires FAD as cofactor.

It is found in the cytoplasm. It carries out the reaction 5-aminomethyl-2-thiouridine(34) in tRNA + S-adenosyl-L-methionine = 5-methylaminomethyl-2-thiouridine(34) in tRNA + S-adenosyl-L-homocysteine + H(+). Its function is as follows. Catalyzes the last two steps in the biosynthesis of 5-methylaminomethyl-2-thiouridine (mnm(5)s(2)U) at the wobble position (U34) in tRNA. Catalyzes the FAD-dependent demodification of cmnm(5)s(2)U34 to nm(5)s(2)U34, followed by the transfer of a methyl group from S-adenosyl-L-methionine to nm(5)s(2)U34, to form mnm(5)s(2)U34. This Campylobacter jejuni subsp. jejuni serotype O:2 (strain ATCC 700819 / NCTC 11168) protein is tRNA 5-methylaminomethyl-2-thiouridine biosynthesis bifunctional protein MnmC.